Here is a 125-residue protein sequence, read N- to C-terminus: MADTKPAAKAAPETSDAYAIVEASGTQIWLQTNRYYDLDRLQADVDETLKLDNVLLVKDSKGTTLGQPYVKDASVELKVMAHRRGPKVIVYKMRPKKKTRRKNGHRQELTRVMVQSISVGGKAIG.

Belongs to the bacterial ribosomal protein bL21 family. Part of the 50S ribosomal subunit. Contacts protein L20.

In terms of biological role, this protein binds to 23S rRNA in the presence of protein L20. The protein is Large ribosomal subunit protein bL21 of Synechococcus sp. (strain CC9902).